The sequence spans 352 residues: Protein RecA (352 aa).

An ATP-binding site is contributed by 65-72 (GPESSGKT).

It belongs to the RecA family.

It is found in the cytoplasm. In terms of biological role, can catalyze the hydrolysis of ATP in the presence of single-stranded DNA, the ATP-dependent uptake of single-stranded DNA by duplex DNA, and the ATP-dependent hybridization of homologous single-stranded DNAs. It interacts with LexA causing its activation and leading to its autocatalytic cleavage. This is Protein RecA from Pseudomonas fluorescens (strain Pf0-1).